A 229-amino-acid polypeptide reads, in one-letter code: Large ribosomal subunit protein uL1 (229 aa).

Belongs to the universal ribosomal protein uL1 family. As to quaternary structure, part of the 50S ribosomal subunit.

Its function is as follows. Binds directly to 23S rRNA. The L1 stalk is quite mobile in the ribosome, and is involved in E site tRNA release. In terms of biological role, protein L1 is also a translational repressor protein, it controls the translation of the L11 operon by binding to its mRNA. The polypeptide is Large ribosomal subunit protein uL1 (Lactococcus lactis subsp. lactis (strain IL1403) (Streptococcus lactis)).